Consider the following 438-residue polypeptide: MKKTHITEHKFADFGLQPQVIDGLEKKGFVYCTPIQALALPVLLSGQDIAGQAQTGTGKTLAFLTATFNHLLTTPAAEGRAETQPRAIIMAPTRELAIQIFNDAEPLLASTGLKAALAYGGESYDKQLAKLQSGVDILIGTTGRIIDFYKQRVFNLNHIQAVVLDEADRMFDLGFIKDIRFLFRRMPEPKDRLNMLFSATLSYRVQELAFEHMNNPEHVVVEPEQKTGHRIQEELFYPSNEHKMALLQTLIEEEWPDRAIIFANTKHRCEQIWAHLAADNHRVGLLTGDVPQKKRERILEQFTQGDVDILVATDVAARGLHIPQVTHVFNYDLPDDCEDYVHRIGRTGRAGASGHSISFACEEYAINLPAIESYIEHAIPTSDYDPSALLTDLPAPLSLRSSPQQRRTNTAGSRNSNNGGNRKPQQRRPRAPRPKKEA.

The Q motif motif lies at 9-37; sequence HKFADFGLQPQVIDGLEKKGFVYCTPIQA. The Helicase ATP-binding domain occupies 40–219; that stretch reads LPVLLSGQDI…FEHMNNPEHV (180 aa). 53 to 60 contacts ATP; that stretch reads AQTGTGKT. The DEAD box motif lies at 165 to 168; that stretch reads DEAD. The Helicase C-terminal domain occupies 245–390; it reads ALLQTLIEEE…TSDYDPSALL (146 aa). Positions 394-438 are disordered; that stretch reads PAPLSLRSSPQQRRTNTAGSRNSNNGGNRKPQQRRPRAPRPKKEA. Residues 406 to 423 are compositionally biased toward low complexity; sequence RRTNTAGSRNSNNGGNRK. A compositionally biased stretch (basic residues) spans 424 to 438; it reads PQQRRPRAPRPKKEA.

The protein belongs to the DEAD box helicase family. RhlB subfamily. Component of the RNA degradosome, which is a multiprotein complex involved in RNA processing and mRNA degradation.

Its subcellular location is the cytoplasm. It carries out the reaction ATP + H2O = ADP + phosphate + H(+). Its function is as follows. DEAD-box RNA helicase involved in RNA degradation. Has RNA-dependent ATPase activity and unwinds double-stranded RNA. This Vibrio cholerae serotype O1 (strain ATCC 39541 / Classical Ogawa 395 / O395) protein is ATP-dependent RNA helicase RhlB.